A 373-amino-acid chain; its full sequence is Peroxisomal biogenesis factor 3 (373 aa).

Over 1 to 15 (MFRSTWNFLKRHKKK) the chain is Cytoplasmic. The tract at residues 1–45 (MFRSTWNFLKRHKKKCIFLGTVLGGVYILGKYGQKKIREIQEREA) is targeting to peroxisomes. A helical membrane pass occupies residues 16-36 (CIFLGTVLGGVYILGKYGQKK). At 37–116 (IREIQEREAA…LKIISFTRSI (80 aa)) the chain is on the peroxisomal side. The chain crosses the membrane as a helical span at residues 117 to 140 (VAVYSTCMLVVLLRVQLNIIGGYI). Residues 120–136 (YSTCMLVVLLRVQLNII) are interaction with PEX19. The Cytoplasmic segment spans residues 141–373 (YLDNAAVGKN…AFSTPQQLEK (233 aa)).

It belongs to the peroxin-3 family. As to quaternary structure, interacts with PEX19.

The protein resides in the peroxisome membrane. Its function is as follows. Involved in peroxisome biosynthesis and integrity. Assembles membrane vesicles before the matrix proteins are translocated. As a docking factor for PEX19, is necessary for the import of peroxisomal membrane proteins in the peroxisomes. The sequence is that of Peroxisomal biogenesis factor 3 (PEX3) from Bos taurus (Bovine).